A 792-amino-acid chain; its full sequence is uncharacterized protein (792 aa).

A substrate-binding site is contributed by 361-362 (WD). The Proton donor role is filled by glutamate 488. 590-591 (KQ) is a binding site for substrate. Positions 753 to 792 (DSPSTIAVRDRKPLLPPPSQPPGREPVSRRHKSLIISAAR) are disordered. Over residues 766–776 (LLPPPSQPPGR) the composition is skewed to pro residues.

Belongs to the glycosyl hydrolase 65 family.

This is an uncharacterized protein from Mycobacterium leprae (strain TN).